Reading from the N-terminus, the 461-residue chain is L-serine dehydratase (461 aa).

It belongs to the iron-sulfur dependent L-serine dehydratase family. [4Fe-4S] cluster is required as a cofactor.

The catalysed reaction is L-serine = pyruvate + NH4(+). It participates in carbohydrate biosynthesis; gluconeogenesis. This chain is L-serine dehydratase (sdaA), found in Mycobacterium bovis (strain ATCC BAA-935 / AF2122/97).